Reading from the N-terminus, the 502-residue chain is 1-aminocyclopropane-1-carboxylate synthase-like protein 1 (502 aa).

The disordered stretch occupies residues 1–24 (MFCLPQQESTAPTTCTGSASTQDM). E106 contributes to the substrate binding site. Position 324 is an N6-(pyridoxal phosphate)lysine (K324).

Belongs to the class-I pyridoxal-phosphate-dependent aminotransferase family.

In terms of biological role, does not catalyze the synthesis of 1-aminocyclopropane-1-carboxylate but is capable of catalyzing the deamination of L-vinylglycine. In Mus musculus (Mouse), this protein is 1-aminocyclopropane-1-carboxylate synthase-like protein 1 (Accs).